The primary structure comprises 132 residues: ATP synthase epsilon chain (132 aa).

It belongs to the ATPase epsilon chain family. In terms of assembly, F-type ATPases have 2 components, CF(1) - the catalytic core - and CF(0) - the membrane proton channel. CF(1) has five subunits: alpha(3), beta(3), gamma(1), delta(1), epsilon(1). CF(0) has three main subunits: a, b and c.

It localises to the cell membrane. In terms of biological role, produces ATP from ADP in the presence of a proton gradient across the membrane. The protein is ATP synthase epsilon chain of Bacillus velezensis (strain DSM 23117 / BGSC 10A6 / LMG 26770 / FZB42) (Bacillus amyloliquefaciens subsp. plantarum).